The primary structure comprises 655 residues: Very long-chain specific acyl-CoA dehydrogenase, mitochondrial (655 aa).

The N-terminal 40 residues, 1–40, are a transit peptide targeting the mitochondrion; that stretch reads MQAARMAASLGRQLLRLGGGSSRLTALLGQPRPGPARRPY. The interval 23-42 is disordered; that stretch reads RLTALLGQPRPGPARRPYAG. Residues 41–482 are catalytic; sequence AGGAAQLALD…ALQGCMDKGK (442 aa). An N6-acetyllysine modification is found at Lys-51. Lys-71 is subject to N6-acetyllysine; alternate. The residue at position 71 (Lys-71) is an N6-succinyllysine; alternate. Position 195 is an N6-succinyllysine (Lys-195). 214 to 223 provides a ligand contact to FAD; that stretch reads FCLTEPSSGS. Cys-237 is modified (S-nitrosocysteine). Lys-239 is modified (N6-acetyllysine; alternate). N6-succinyllysine; alternate is present on Lys-239. Residue 249–251 coordinates FAD; it reads WIS. Lys-276 and Lys-278 each carry N6-acetyllysine; alternate. N6-succinyllysine; alternate occurs at positions 276 and 278. Lys-298 is subject to N6-acetyllysine. Lys-331 carries the N6-acetyllysine; alternate modification. Lys-331 is subject to N6-succinyllysine; alternate. The residue at position 372 (Lys-372) is an N6-succinyllysine. 461 to 463 serves as a coordination point for substrate; it reads FEG. Glu-462 serves as the catalytic Proton acceptor. 464–466 contacts FAD; that stretch reads TND. Lys-482 is subject to N6-acetyllysine; alternate. Lys-482 is modified (N6-succinyllysine; alternate). A membrane-anchoring region spans residues 483–516; sequence ELSGLGSALKNPFGNAGLLLGEAGKQLRRRAGLG. A phosphoserine mark is found at Ser-517 and Ser-522. An N6-acetyllysine modification is found at Lys-550. Lys-556 bears the N6-acetyllysine; alternate mark. Lys-556 carries the N6-succinyllysine; alternate modification. Gln-562 is a binding site for FAD. An N6-succinyllysine modification is found at Lys-639.

The protein belongs to the acyl-CoA dehydrogenase family. As to quaternary structure, homodimer. Homodimerizes after import into the mitochondrion. It depends on FAD as a cofactor. In terms of processing, S-nitrosylation at Cys-237 in liver improves catalytic efficiency. In terms of tissue distribution, predominantly expressed in heart and skeletal muscle (at protein level). Also detected in kidney and liver (at protein level).

It localises to the mitochondrion inner membrane. The enzyme catalyses a very-long-chain 2,3-saturated fatty acyl-CoA + oxidized [electron-transfer flavoprotein] + H(+) = a very-long-chain (2E)-enoyl-CoA + reduced [electron-transfer flavoprotein]. The catalysed reaction is decanoyl-CoA + oxidized [electron-transfer flavoprotein] + H(+) = (2E)-decenoyl-CoA + reduced [electron-transfer flavoprotein]. It carries out the reaction dodecanoyl-CoA + oxidized [electron-transfer flavoprotein] + H(+) = (2E)-dodecenoyl-CoA + reduced [electron-transfer flavoprotein]. It catalyses the reaction tetradecanoyl-CoA + oxidized [electron-transfer flavoprotein] + H(+) = (2E)-tetradecenoyl-CoA + reduced [electron-transfer flavoprotein]. The enzyme catalyses oxidized [electron-transfer flavoprotein] + hexadecanoyl-CoA + H(+) = (2E)-hexadecenoyl-CoA + reduced [electron-transfer flavoprotein]. The catalysed reaction is octadecanoyl-CoA + oxidized [electron-transfer flavoprotein] + H(+) = (2E)-octadecenoyl-CoA + reduced [electron-transfer flavoprotein]. It carries out the reaction eicosanoyl-CoA + oxidized [electron-transfer flavoprotein] + H(+) = (2E)-eicosenoyl-CoA + reduced [electron-transfer flavoprotein]. It catalyses the reaction docosanoyl-CoA + oxidized [electron-transfer flavoprotein] + H(+) = (2E)-docosenoyl-CoA + reduced [electron-transfer flavoprotein]. The enzyme catalyses tetracosanoyl-CoA + oxidized [electron-transfer flavoprotein] + H(+) = (2E)-tetracosenoyl-CoA + reduced [electron-transfer flavoprotein]. The catalysed reaction is (9Z)-hexadecenoyl-CoA + oxidized [electron-transfer flavoprotein] + H(+) = (2E,9Z)-hexadecadienoyl-CoA + reduced [electron-transfer flavoprotein]. It carries out the reaction oxidized [electron-transfer flavoprotein] + (9Z)-octadecenoyl-CoA + H(+) = (2E,9Z)-octadecadienoyl-CoA + reduced [electron-transfer flavoprotein]. Its pathway is lipid metabolism; mitochondrial fatty acid beta-oxidation. Functionally, very long-chain specific acyl-CoA dehydrogenase is one of the acyl-CoA dehydrogenases that catalyze the first step of mitochondrial fatty acid beta-oxidation, an aerobic process breaking down fatty acids into acetyl-CoA and allowing the production of energy from fats. The first step of fatty acid beta-oxidation consists in the removal of one hydrogen from C-2 and C-3 of the straight-chain fatty acyl-CoA thioester, resulting in the formation of trans-2-enoyl-CoA. Among the different mitochondrial acyl-CoA dehydrogenases, very long-chain specific acyl-CoA dehydrogenase acts specifically on acyl-CoAs with saturated 12 to 24 carbons long primary chains. The polypeptide is Very long-chain specific acyl-CoA dehydrogenase, mitochondrial (Homo sapiens (Human)).